Here is a 276-residue protein sequence, read N- to C-terminus: Ribonuclease 3 (276 aa).

The tract at residues 1-29 (MRGTVSVPKKAEDAKADPPAKKKADTQAS) is disordered. The segment covering 9–25 (KKAEDAKADPPAKKKAD) has biased composition (basic and acidic residues). Residues 31 to 157 (HTLLEGRLGY…VIGAVYLDQG (127 aa)) enclose the RNase III domain. Glu-70 lines the Mg(2+) pocket. The active site involves Asp-74. Mg(2+)-binding residues include Asp-143 and Glu-146. The active site involves Glu-146. Residues 184 to 252 (DWKTSLQELT…AESAWRSIRA (69 aa)) form the DRBM domain. Positions 227–276 (YGTGTGRSKKEAEQQAAESAWRSIRAAADERAKATADAVDADPDEASASA) are disordered. Over residues 265-276 (VDADPDEASASA) the composition is skewed to acidic residues.

Belongs to the ribonuclease III family. As to quaternary structure, homodimer. Requires Mg(2+) as cofactor.

The protein resides in the cytoplasm. It carries out the reaction Endonucleolytic cleavage to 5'-phosphomonoester.. Functionally, digests double-stranded RNA. Involved in the processing of primary rRNA transcript to yield the immediate precursors to the large and small rRNAs (23S and 16S). Also processes some mRNAs, and tRNAs when they are encoded in the rRNA operon. May modulate key aspects of gene expression as its absence has extensive effects on the abundance of about 200 different transcripts. Probably processes pre-crRNA and tracrRNA of type II CRISPR loci if present in the organism. This Streptomyces coelicolor (strain ATCC BAA-471 / A3(2) / M145) protein is Ribonuclease 3 (rnc).